Reading from the N-terminus, the 466-residue chain is UDP-N-acetylmuramoylalanine--D-glutamate ligase (466 aa).

Residue 121-127 participates in ATP binding; the sequence is GTNGKST.

Belongs to the MurCDEF family.

It localises to the cytoplasm. The enzyme catalyses UDP-N-acetyl-alpha-D-muramoyl-L-alanine + D-glutamate + ATP = UDP-N-acetyl-alpha-D-muramoyl-L-alanyl-D-glutamate + ADP + phosphate + H(+). It functions in the pathway cell wall biogenesis; peptidoglycan biosynthesis. Its function is as follows. Cell wall formation. Catalyzes the addition of glutamate to the nucleotide precursor UDP-N-acetylmuramoyl-L-alanine (UMA). The protein is UDP-N-acetylmuramoylalanine--D-glutamate ligase of Mesorhizobium japonicum (strain LMG 29417 / CECT 9101 / MAFF 303099) (Mesorhizobium loti (strain MAFF 303099)).